The primary structure comprises 871 residues: Nonsense-mediated mRNA decay factor SMG8 (871 aa).

A disordered region spans residues 541 to 596; the sequence is LDDMELPESLQQSYTSSEDSSEDDDDFAIQTASSEDSLSGSDSYARPGSRRDEFES. Low complexity predominate over residues 573–583; sequence SSEDSLSGSDS.

Belongs to the SMG8 family.

Its function is as follows. Involved in nonsense-mediated decay (NMD) of mRNAs containing premature stop codons. Probable component of kinase complex containing smg-1 and recruited to stalled ribosomes. This chain is Nonsense-mediated mRNA decay factor SMG8 (smg-8), found in Caenorhabditis briggsae.